Reading from the N-terminus, the 156-residue chain is Small ribosomal subunit protein uS7 (156 aa).

The protein belongs to the universal ribosomal protein uS7 family. Part of the 30S ribosomal subunit. Contacts proteins S9 and S11.

One of the primary rRNA binding proteins, it binds directly to 16S rRNA where it nucleates assembly of the head domain of the 30S subunit. Is located at the subunit interface close to the decoding center, probably blocks exit of the E-site tRNA. The sequence is that of Small ribosomal subunit protein uS7 from Polynucleobacter asymbioticus (strain DSM 18221 / CIP 109841 / QLW-P1DMWA-1) (Polynucleobacter necessarius subsp. asymbioticus).